Here is a 324-residue protein sequence, read N- to C-terminus: Galactosylgalactosylxylosylprotein 3-beta-glucuronosyltransferase 2 (324 aa).

The Cytoplasmic portion of the chain corresponds to 1-2; the sequence is MK. The helical; Signal-anchor for type II membrane protein transmembrane segment at 3–23 threads the bilayer; that stretch reads SALCNRFFILLPWILIVIIML. Residues 24 to 324 lie on the Lumenal side of the membrane; that stretch reads DVDPRRPAPQ…YHMDTVNIEV (301 aa). Residues 34–78 form a disordered region; that stretch reads LTSRPYFSPHTVGCGGSRVPLRRSSPGRDAAEKRNESRPQLQPEP. N68 is a glycosylation site (N-linked (GlcNAc...) asparagine). D188 provides a ligand contact to Mn(2+). The Proton acceptor role is filled by E274. N-linked (GlcNAc...) asparagine glycosylation is present at N293.

It belongs to the glycosyltransferase 43 family. Homodimer. Mn(2+) serves as cofactor. Expressed in the cerebral cortex, cerebellum and whole brain.

The protein resides in the golgi apparatus membrane. It carries out the reaction 3-O-(beta-D-galactosyl-(1-&gt;3)-beta-D-galactosyl-(1-&gt;4)-beta-D-xylosyl)-L-seryl-[protein] + UDP-alpha-D-glucuronate = 3-O-(beta-D-GlcA-(1-&gt;3)-beta-D-Gal-(1-&gt;3)-beta-D-Gal-(1-&gt;4)-beta-D-Xyl)-L-seryl-[protein] + UDP + H(+). The protein operates within protein modification; protein glycosylation. Involved in the biosynthesis of L2/HNK-1 carbohydrate epitope on both glycolipids and glycoproteins. Substrates include asialo-orosomucoid (ASOR), paragloboside (lacto-N-neotetraosylceramide), Gal-beta-1,4-GlcNAc-beta-1,3-Gal-beta-1,4-Glc-pyridylamine and Gal-beta-1,3-GlcNAc-beta-1,3-Gal-beta-1,4-Glc-pyridylamine. The sequence is that of Galactosylgalactosylxylosylprotein 3-beta-glucuronosyltransferase 2 (B3gat2) from Rattus norvegicus (Rat).